Reading from the N-terminus, the 208-residue chain is MKDFLQKVNSYIKEAFGAGKYLYDGLSVTFDHLRRRPVTVQYPYEKLIPSERYRGRIHYEFDKCIACEVCVRVCPINLPVVDWVMNKETKKKELRNYSIDFGVCIFCGNCVEYCPTNCLSMTEEYELATFDRHNLNFDNVALGRLPTNVTTDPSVKPLRELAYLPKGVMDPHEVSSSDARVGKLPEEVYDWMKPKTNEMSDPAVKLNK.

4Fe-4S ferredoxin-type domains lie at 55–84 (GRIH…VDWV) and 95–124 (RNYS…MTEE). Cys64, Cys67, Cys70, Cys74, Cys104, Cys107, Cys110, and Cys114 together coordinate [4Fe-4S] cluster.

The protein belongs to the complex I 23 kDa subunit family. As to quaternary structure, NDH-1 is composed of at least 11 different subunits. [4Fe-4S] cluster is required as a cofactor.

It is found in the cellular thylakoid membrane. The enzyme catalyses a plastoquinone + NADH + (n+1) H(+)(in) = a plastoquinol + NAD(+) + n H(+)(out). The catalysed reaction is a plastoquinone + NADPH + (n+1) H(+)(in) = a plastoquinol + NADP(+) + n H(+)(out). Its function is as follows. NDH-1 shuttles electrons from an unknown electron donor, via FMN and iron-sulfur (Fe-S) centers, to quinones in the respiratory and/or the photosynthetic chain. The immediate electron acceptor for the enzyme in this species is believed to be plastoquinone. Couples the redox reaction to proton translocation, and thus conserves the redox energy in a proton gradient. In Prochlorococcus marinus (strain MIT 9515), this protein is NAD(P)H-quinone oxidoreductase subunit I.